We begin with the raw amino-acid sequence, 3396 residues long: Versican core protein (3396 aa).

The signal sequence occupies residues 1–20; sequence MFINIKSILWMCSTLIVTHA. Residues 21 to 146 form the Ig-like V-type domain; the sequence is LHKVKVGKSP…EDTQDTVSLT (126 aa). Intrachain disulfides connect cysteine 44–cysteine 130, cysteine 172–cysteine 243, cysteine 196–cysteine 217, cysteine 270–cysteine 345, and cysteine 294–cysteine 315. Asparagine 57 carries N-linked (GlcNAc...) asparagine glycosylation. 2 consecutive Link domains span residues 150-245 and 251-347; these read VVFH…YCYV and DVFH…YCFK. N-linked (GlcNAc...) asparagine glycosylation is present at asparagine 330. Residues 348-1335 are GAG-alpha (glucosaminoglycan attachment domain); it reads PKEATTIDLS…IIEVRENKTG (988 aa). Polar residues predominate over residues 420–430; that stretch reads ATKLPTPTGST. Disordered stretches follow at residues 420 to 439 and 603 to 622; these read ATKL…MDDY and STTV…MDDW. The N-linked (GlcNAc...) asparagine glycan is linked to asparagine 615. O-linked (Xyl...) (chondroitin sulfate) serine glycosylation occurs at serine 659. Residues asparagine 782 and asparagine 809 are each glycosylated (N-linked (GlcNAc...) asparagine). Disordered regions lie at residues 807–829, 1126–1154, and 1277–1316; these read EDNT…LPPA, IGPK…TSSL, and REYF…PAST. Polar residues predominate over residues 811 to 824; that stretch reads TSKPLESTEPSASS. Over residues 1143–1154 the composition is skewed to low complexity; that stretch reads EGSSTTGFTSSL. N-linked (GlcNAc...) asparagine glycosylation is found at asparagine 1332 and asparagine 1398. Positions 1336-3089 are GAG-beta; it reads RMSDLSVIGH…VEGTAIYLPG (1754 aa). Disordered stretches follow at residues 1420–1497 and 1510–1539; these read VPKD…SGGE and FESG…HTEP. Residues 1422–1433 are compositionally biased toward basic and acidic residues; it reads KDPEAAEARRGQ. N-linked (GlcNAc...) asparagine glycosylation is found at asparagine 1442 and asparagine 1468. Positions 1469–1480 are enriched in low complexity; that stretch reads ESTETTESLEVT. Positions 1517–1538 are enriched in basic and acidic residues; it reads KGAESVTERDTEVGHQAHEHTE. O-linked (Xyl...) (chondroitin sulfate) serine glycosylation is found at serine 1548 and serine 1631. Asparagine 1663 is a glycosylation site (N-linked (GlcNAc...) asparagine). 2 disordered regions span residues 1717 to 1737 and 1759 to 1789; these read STTV…TAST and PNVA…MTDS. The segment covering 1720-1729 has biased composition (basic and acidic residues); it reads VEEKKRKEEE. The segment covering 1760-1781 has biased composition (polar residues); the sequence is NVATSSDSGTRKSFMSLTTPTQ. Asparagine 1898 carries an N-linked (GlcNAc...) asparagine glycan. O-linked (Xyl...) (chondroitin sulfate) serine glycans are attached at residues serine 1935 and serine 1959. 3 disordered regions span residues 1962–1994, 2107–2134, and 2168–2188; these read AAFR…STMV, RQEI…NSPA, and KEMK…PDAN. Low complexity predominate over residues 1969–1978; sequence TSPSTVPTSV. Acidic residues predominate over residues 2111–2120; it reads ESETTSEEQI. Serine 2116 bears the Phosphoserine; by FAM20C mark. The N-linked (GlcNAc...) asparagine glycan is linked to asparagine 2179. Serine 2247 and serine 2254 each carry an O-linked (Xyl...) (chondroitin sulfate) serine glycan. Asparagine 2272, asparagine 2280, asparagine 2360, asparagine 2385, and asparagine 2392 each carry an N-linked (GlcNAc...) asparagine glycan. Disordered regions lie at residues 2371–2396, 2445–2473, 2493–2518, and 2598–2617; these read TSRP…ETTT, SATT…EVPS, SEQN…STDG, and DTEV…DDST. Polar residues-rich tracts occupy residues 2445–2461 and 2496–2513; these read SATT…TFVS and NKSS…VSYE. An N-linked (GlcNAc...) asparagine glycan is attached at asparagine 2496. Position 2608 is a phosphoserine (serine 2608). Threonine 2617 carries the post-translational modification Phosphothreonine. Residue asparagine 2628 is glycosylated (N-linked (GlcNAc...) asparagine). Serine 2722, serine 2723, and serine 2767 each carry an O-linked (Xyl...) (chondroitin sulfate) serine glycan. Disordered regions lie at residues 2834 to 2856 and 2881 to 2905; these read GSEA…DVGS and EEYL…EDDG. The segment covering 2896–2905 has biased composition (basic and acidic residues); that stretch reads TKLEPSEDDG. An N-linked (GlcNAc...) asparagine glycan is attached at asparagine 2934. Residue serine 2941 is glycosylated (O-linked (Xyl...) (chondroitin sulfate) serine). An N-linked (GlcNAc...) asparagine glycan is attached at asparagine 3067. One can recognise an EGF-like 1 domain in the interval 3089–3125; sequence GPDRCKMNPCLNGGTCYPTETSYVCTCVPGYSGDQCE. Disulfide bonds link cysteine 3093–cysteine 3104, cysteine 3098–cysteine 3113, cysteine 3115–cysteine 3124, cysteine 3131–cysteine 3142, cysteine 3136–cysteine 3151, cysteine 3153–cysteine 3162, cysteine 3169–cysteine 3180, cysteine 3197–cysteine 3289, cysteine 3265–cysteine 3281, cysteine 3296–cysteine 3339, and cysteine 3325–cysteine 3352. The EGF-like 2; calcium-binding domain occupies 3127–3163; it reads DFDECHSNPCRNGATCVDGFNTFRCLCLPSYVGALCE. The region spanning 3176 to 3290 is the C-type lectin domain; sequence FQGQCYKYFA…CNYHLTYTCK (115 aa). The Sushi domain occupies 3294–3354; the sequence is VACGQPPVVE…WAIPKITCMN (61 aa). N-linked (GlcNAc...) asparagine glycosylation is found at asparagine 3369 and asparagine 3379. A compositionally biased stretch (polar residues) spans 3371 to 3380; that stretch reads SSAKDNSINT. Positions 3371 to 3396 are disordered; the sequence is SSAKDNSINTSKHDHRWSRRWQESRR.

This sequence belongs to the aggrecan/versican proteoglycan family. As to quaternary structure, interacts with FBLN1. Post-translationally, phosphorylated by FAM20C in the extracellular medium. Proteolytically cleaved by ADAMTS5 and ADAMTS15 in the pericellular matrix surrounding myoblasts, facilitating myoblast contact and fusion which is required for skeletal muscle development and regeneration. Detected in placenta (at protein level). Detected in cerebrospinal fluid, fibroblasts and urine (at protein level). Expressed in the retina (at protein level). Cerebral white matter and plasma. Isoform V0: Expressed in normal brain, gliomas, medulloblastomas, schwannomas, neurofibromas, and meningiomas. Isoform V1: Expressed in normal brain, gliomas, medulloblastomas, schwannomas, neurofibromas, and meningiomas. Isoform V2: Restricted to normal brain and gliomas. Isoform V3: Found in all these tissues except medulloblastomas.

It localises to the secreted. The protein resides in the extracellular space. It is found in the extracellular matrix. Its subcellular location is the cell projection. The protein localises to the cilium. It localises to the photoreceptor outer segment. The protein resides in the interphotoreceptor matrix. Functionally, may play a role in intercellular signaling and in connecting cells with the extracellular matrix. May take part in the regulation of cell motility, growth and differentiation. Binds hyaluronic acid. In Homo sapiens (Human), this protein is Versican core protein (VCAN).